The chain runs to 392 residues: MAQTEIKSYTLNFGPQHPAAHGVLRLVLELSGEVIERADPHIGLLHRGTEKLIEYKTYLQALPYFDRLDYACPMNQEHAYVLAVEKLLGITVPPRAQYLRTLFNEVTRLINHIMNTTSMALDIGAMTPLLYGFEEREHLLEFSERASGARMHAAWFRPGGVARDVPPDLLEDILKFCDSFPKYLDDVEHLLDENRIFKQRTVDIGKVTAQQALDWGFTGPVLRGCGVPWDLRKSQPYDAYAAMDFDIPTGANGDCYDRYLVRMAEQRQSIRIMRQCIEKMPDGPVKAVDHKVTPPSRGEMKSSMEALIHHFKLFTEGFKVPEGETYTAVEAATGEFGVYLVSDGTNRPYRCKIRSPGYVHLQGLDLMSRGHMLADVVANIGSIDVVFGEIDR.

Belongs to the complex I 49 kDa subunit family. NDH-1 is composed of 14 different subunits. Subunits NuoB, C, D, E, F, and G constitute the peripheral sector of the complex.

Its subcellular location is the cell inner membrane. It carries out the reaction a quinone + NADH + 5 H(+)(in) = a quinol + NAD(+) + 4 H(+)(out). Functionally, NDH-1 shuttles electrons from NADH, via FMN and iron-sulfur (Fe-S) centers, to quinones in the respiratory chain. The immediate electron acceptor for the enzyme in this species is believed to be ubiquinone. Couples the redox reaction to proton translocation (for every two electrons transferred, four hydrogen ions are translocated across the cytoplasmic membrane), and thus conserves the redox energy in a proton gradient. This Rhodospirillum rubrum (strain ATCC 11170 / ATH 1.1.1 / DSM 467 / LMG 4362 / NCIMB 8255 / S1) protein is NADH-quinone oxidoreductase subunit D.